The following is a 475-amino-acid chain: Argininosuccinate lyase (475 aa).

This sequence belongs to the lyase 1 family. Argininosuccinate lyase subfamily.

The protein localises to the cytoplasm. The catalysed reaction is 2-(N(omega)-L-arginino)succinate = fumarate + L-arginine. It functions in the pathway amino-acid biosynthesis; L-arginine biosynthesis; L-arginine from L-ornithine and carbamoyl phosphate: step 3/3. This chain is Argininosuccinate lyase, found in Streptomyces griseus subsp. griseus (strain JCM 4626 / CBS 651.72 / NBRC 13350 / KCC S-0626 / ISP 5235).